A 389-amino-acid polypeptide reads, in one-letter code: MTTSVCLLGASGSVGESTLKVLRAYPEKFRLHSFSVHSNLEKAKEIQKEFSPDFICVSSDFADVGVLGNKLGRTQILYGESSLCELVREPEVEIVITAIVGSVGLRPTIAAITAGKRLGIANKETLVTSGPLIQSLIAKHNTKVVPVDSEHNALFQLLESLNPNSVEKIILTASGGAFRDLPVEQLSSVTKEQALHHPTWNMGPKITIDSNGMINKGLEVIEAHFLFNVPYDKIGVVIHPQSIAHGIVELKDGASFLYASYPDMIFPIAHSLFHPEPVPKVLRSYPAKDWGKLEFREPDFKRYPGLGLAFEAGKVGGTAPCIFNAANEAAVELFLKDEIRFIEIPDYIRKTLDEIKIEFPLSLEEYEEADRIARETVRNLKARKVVSAC.

Positions 11, 12, 13, 14, 39, and 122 each coordinate NADPH. A 1-deoxy-D-xylulose 5-phosphate-binding site is contributed by lysine 123. Residue glutamate 124 coordinates NADPH. Residue aspartate 148 participates in Mn(2+) binding. 4 residues coordinate 1-deoxy-D-xylulose 5-phosphate: serine 149, glutamate 150, serine 174, and histidine 197. Residue glutamate 150 coordinates Mn(2+). Glycine 203 serves as a coordination point for NADPH. 1-deoxy-D-xylulose 5-phosphate contacts are provided by serine 210, asparagine 215, lysine 216, and glutamate 219. Glutamate 219 provides a ligand contact to Mn(2+).

Belongs to the DXR family. Mg(2+) serves as cofactor. Mn(2+) is required as a cofactor.

It carries out the reaction 2-C-methyl-D-erythritol 4-phosphate + NADP(+) = 1-deoxy-D-xylulose 5-phosphate + NADPH + H(+). It functions in the pathway isoprenoid biosynthesis; isopentenyl diphosphate biosynthesis via DXP pathway; isopentenyl diphosphate from 1-deoxy-D-xylulose 5-phosphate: step 1/6. In terms of biological role, catalyzes the NADPH-dependent rearrangement and reduction of 1-deoxy-D-xylulose-5-phosphate (DXP) to 2-C-methyl-D-erythritol 4-phosphate (MEP). The sequence is that of 1-deoxy-D-xylulose 5-phosphate reductoisomerase from Leptospira interrogans serogroup Icterohaemorrhagiae serovar copenhageni (strain Fiocruz L1-130).